The chain runs to 442 residues: MSLTLRKLDSADAGFAAQLRQVLAFEASEDEAIDRAAAQILADVKVRGDAAVLETTLRFDRVEADSVAALELSPVVLQAALDGLEPTRRAALEAAAARVRAYHEKQKIECGTHSWEYAEADGTVLGQKVTPLDRVGIYVPGGKAAYPSSVLMNAIPARVAGVKEIIMVVPTPGGVRNELVLAAACIAGVDRVFTIGGAQAVGALAYGTETVPAVDKIVGPGNAYVAAAKRRVFGTVGIDMIAGPSEILVICDGTTDPDWVAMDLFSQAEHDELAQSILLCPDAGFIAQVEASIRRQLDDMPRKEVIAASLSGRGALIQVRDMDEACEIANDIAPEHLEISAENPRQWAERIRHAGAIFLGKYTSESLGDYCAGPNHVLPTSRTARFSSPLGVYDFIKRSSLIEVSEAGAQMLGEIASELAYGEGLQAHARSAEYRLQRTTTE.

NAD(+) contacts are provided by Y138, Q199, and N222. Residues S245, Q267, and H270 each coordinate substrate. 2 residues coordinate Zn(2+): Q267 and H270. Residues E335 and H336 each act as proton acceptor in the active site. Residues H336, D369, E423, and H428 each contribute to the substrate site. D369 is a Zn(2+) binding site. H428 serves as a coordination point for Zn(2+).

It belongs to the histidinol dehydrogenase family. Zn(2+) serves as cofactor.

The catalysed reaction is L-histidinol + 2 NAD(+) + H2O = L-histidine + 2 NADH + 3 H(+). It participates in amino-acid biosynthesis; L-histidine biosynthesis; L-histidine from 5-phospho-alpha-D-ribose 1-diphosphate: step 9/9. In terms of biological role, catalyzes the sequential NAD-dependent oxidations of L-histidinol to L-histidinaldehyde and then to L-histidine. The chain is Histidinol dehydrogenase from Ralstonia nicotianae (strain ATCC BAA-1114 / GMI1000) (Ralstonia solanacearum).